The chain runs to 462 residues: Hydroxymethylglutaryl-CoA synthase (462 aa).

The active-site Proton donor/acceptor is E92. C124 functions as the Acyl-thioester intermediate in the catalytic mechanism. Residues C124, T167, S219, H257, K266, N327, and S360 each coordinate (3S)-3-hydroxy-3-methylglutaryl-CoA. H257 acts as the Proton donor/acceptor in catalysis. K408 participates in a covalent cross-link: Glycyl lysine isopeptide (Lys-Gly) (interchain with G-Cter in SUMO).

The protein belongs to the thiolase-like superfamily. HMG-CoA synthase family. In terms of processing, ubiquitinated.

It carries out the reaction acetoacetyl-CoA + acetyl-CoA + H2O = (3S)-3-hydroxy-3-methylglutaryl-CoA + CoA + H(+). Its pathway is metabolic intermediate biosynthesis; (R)-mevalonate biosynthesis; (R)-mevalonate from acetyl-CoA: step 2/3. In terms of biological role, this enzyme condenses acetyl-CoA with acetoacetyl-CoA to form HMG-CoA, which is the substrate for HMG-CoA reductase. This Caenorhabditis elegans protein is Hydroxymethylglutaryl-CoA synthase.